Reading from the N-terminus, the 385-residue chain is 4-hydroxy-3-methylbut-2-en-1-yl diphosphate synthase (flavodoxin) (385 aa).

Positions 280, 283, 315, and 322 each coordinate [4Fe-4S] cluster.

Belongs to the IspG family. [4Fe-4S] cluster serves as cofactor.

The catalysed reaction is (2E)-4-hydroxy-3-methylbut-2-enyl diphosphate + oxidized [flavodoxin] + H2O + 2 H(+) = 2-C-methyl-D-erythritol 2,4-cyclic diphosphate + reduced [flavodoxin]. The protein operates within isoprenoid biosynthesis; isopentenyl diphosphate biosynthesis via DXP pathway; isopentenyl diphosphate from 1-deoxy-D-xylulose 5-phosphate: step 5/6. Its function is as follows. Converts 2C-methyl-D-erythritol 2,4-cyclodiphosphate (ME-2,4cPP) into 1-hydroxy-2-methyl-2-(E)-butenyl 4-diphosphate. The protein is 4-hydroxy-3-methylbut-2-en-1-yl diphosphate synthase (flavodoxin) of Streptomyces griseus subsp. griseus (strain JCM 4626 / CBS 651.72 / NBRC 13350 / KCC S-0626 / ISP 5235).